Here is a 2269-residue protein sequence, read N- to C-terminus: Neuron navigator 3 (2269 aa).

One can recognise a Calponin-homology (CH) domain in the interval 55-162 (SKICKIYTDW…LFFILSRYKQ (108 aa)). The segment covering 186–207 (TGAAQLSQHKTQDMQSSLTARY) has biased composition (polar residues). 2 disordered regions span residues 186 to 358 (TGAA…RSML) and 388 to 532 (SEFG…NKGS). The segment covering 236–252 (GSGSNSSKGSSNLNRRS) has biased composition (low complexity). 2 stretches are compositionally biased toward polar residues: residues 267-291 (ASGN…QQLA) and 305-319 (SKSM…SSML). The span at 323–333 (PPSPTSSPTPP) shows a compositional bias: pro residues. Over residues 346 to 356 (ASKSAPGNQRS) the composition is skewed to polar residues. A compositionally biased stretch (low complexity) spans 411–432 (PSASAFAPPSKSNNCKNHNNKS). Polar residues predominate over residues 505-518 (TATSKPAGTQSCVP). Residues 644–672 (ETRRMRTVKNIADLRQNLEETMSSLRGTQ) adopt a coiled-coil conformation. Disordered stretches follow at residues 692–737 (GRGL…STTV), 756–776 (ASGA…VGPE), 836–1036 (VKEM…IPGP), 1050–1079 (SGSA…TSLD), 1097–1412 (VPLQ…GTTC), and 1461–1487 (GGSA…TDEV). Polar residues-rich tracts occupy residues 699 to 716 (SSRS…SSPR) and 727 to 737 (PPRSSAGSTTV). Positions 847–860 (DSSSVSSGLSDTLD) are enriched in low complexity. The segment covering 874 to 886 (GISSRKSKAAQSN) has biased composition (polar residues). The segment covering 919 to 932 (PSCKWKTSSPSSSC) has biased composition (low complexity). Residues 939–950 (QKTGLPMSQTGS) show a composition bias toward polar residues. The segment covering 977–989 (GKTDDAKASEKGK) has biased composition (basic and acidic residues). Residues 1110–1137 (SSSGGSSVVSRSGHRSSSSSIDSNVSGK) show a composition bias toward low complexity. Over residues 1163–1172 (GRSSPVTINQ) the composition is skewed to polar residues. 2 stretches are compositionally biased toward low complexity: residues 1185–1202 (GTGL…TQSG) and 1223–1234 (GSKASSKPSSPG). Gly residues predominate over residues 1266–1276 (GSLGSMGGQSG). Residues 1292-1305 (SPASSPASGLSLPS) show a composition bias toward low complexity. Polar residues-rich tracts occupy residues 1313–1339 (NLSS…SSES) and 1354–1363 (RTGSVKSTLS). Residues 1381–1391 (TSHEEGKEWLR) are compositionally biased toward basic and acidic residues. Polar residues predominate over residues 1392-1412 (SHSTGGLQDTGSPLSPPGTTC). The stretch at 1499 to 1586 (SSLYSAQIRK…TDAQTAIQVA (88 aa)) forms a coiled coil. 3 disordered regions span residues 1602 to 1672 (QHSS…PSSP), 1756 to 1792 (NDRL…SRQS), and 2207 to 2269 (GYSS…ESAL). Low complexity-rich tracts occupy residues 1605–1623 (SESM…LGSA) and 1765–1792 (TTPA…SRQS). Residues 1697-1765 (CECTEAEAEI…NDRLKSSGNT (69 aa)) adopt a coiled-coil conformation. Residues 2208–2224 (YSSSKDGAASKQVSQSD) are compositionally biased toward polar residues.

It belongs to the Nav/unc-53 family. As to quaternary structure, interacts with F-actin.

Its subcellular location is the nucleus outer membrane. It localises to the golgi apparatus. The protein localises to the cell projection. It is found in the lamellipodium. The protein resides in the filopodium. Involved in liver and heart organogenesis during embryo development. Plays a role in the migration of hepatoblasts from the intestinal endoderm during liver organogenesis; possibly by modulating actin polymerization during hepatoblast outgrowth. May be involved in neuron regeneration. In Danio rerio (Zebrafish), this protein is Neuron navigator 3 (nav3).